Reading from the N-terminus, the 1649-residue chain is PHD and RING finger domain-containing protein 1 (1649 aa).

The segment at 1-79 is disordered; it reads MDDDSLDELV…RSGSEDSEDD (79 aa). A Phosphoserine modification is found at Ser-5. Over residues 54–79 the composition is skewed to acidic residues; the sequence is TDGEDEGASEEEDLEDRSGSEDSEDD. The segment at 108 to 149 adopts an RING-type; degenerate zinc-finger fold; the sequence is CPICLNAFRDQAVGTPENCAHYFCLDCIVEWSKNANSCPVDR. The PHD-type zinc-finger motif lies at 183-233; that stretch reads PTFCEVCGRSDREDRLLLCDGCDAGYHMECLDPPLQEVPVDEWFCPECAAP. The disordered stretch occupies residues 324–398; the sequence is VYQRPLTPRT…TRSRIARTLG (75 aa). At Thr-330 the chain carries Phosphothreonine. The span at 334–353 shows a compositional bias: basic residues; sequence PARRKRKTRRRKKVPGRKKT. Over residues 354 to 366 the composition is skewed to low complexity; that stretch reads PSGPSAKSKSSAT. Positions 367–382 are enriched in basic residues; it reads RSKKRQHRVKKRRGKK. A phosphoserine mark is found at Ser-445 and Ser-455. Disordered regions lie at residues 534–600, 644–871, 888–1240, and 1281–1395; these read KRAA…GAPV, SAAS…PKAQ, FGTE…KAPL, and IQLD…PLLR. The span at 568–589 shows a compositional bias: polar residues; that stretch reads SPAQGPSGNRPQSTGLSCQGRS. Basic and acidic residues-rich tracts occupy residues 685–697 and 727–742; these read IRRD…RDAA and TRAE…REPG. Residues 786–796 show a composition bias toward polar residues; sequence AHSSQLSSPGF. A compositionally biased stretch (basic and acidic residues) spans 802 to 812; it reads PVDDKEQRKEN. 6 positions are modified to phosphoserine: Ser-814, Ser-845, Ser-846, Ser-864, Ser-867, and Ser-915. 2 stretches are compositionally biased toward polar residues: residues 835-848 and 859-871; these read PTGS…SSPE and ITRT…PKAQ. Thr-917 is modified (phosphothreonine). Phosphoserine occurs at positions 936, 973, and 991. Over residues 988 to 999 the composition is skewed to low complexity; the sequence is RPPSRSRSTSSS. The span at 1000–1011 shows a compositional bias: basic residues; sequence RSRKKAKRKRVS. Basic and acidic residues predominate over residues 1012 to 1030; that stretch reads REHGRTRSGTRSESRDRSS. Over residues 1043 to 1053 the composition is skewed to basic residues; sequence RRQRSKAKSRR. A compositionally biased stretch (basic and acidic residues) spans 1054–1063; the sequence is SSSDRSSSRE. Positions 1064 to 1090 are enriched in basic residues; sequence RAKRKKAKDKSREHRRGPWGHSRRTSR. Residues 1091–1101 show a composition bias toward low complexity; that stretch reads SRSGSPGSSSY. The segment covering 1106 to 1118 has biased composition (basic residues); that stretch reads SRKKKKRRSASRP. Residues Ser-1124 and Ser-1128 each carry the phosphoserine modification. 2 stretches are compositionally biased toward basic and acidic residues: residues 1141–1151 and 1181–1198; these read RSHERPDRKES and REKW…KGAV. Phosphoserine is present on residues Ser-1202 and Ser-1229. Residues 1284 to 1297 show a composition bias toward low complexity; sequence DDMSSPPSPESTDS. The span at 1345–1356 shows a compositional bias: basic and acidic residues; sequence HLLRPDAAEKAE. A phosphoserine mark is found at Ser-1359, Ser-1360, and Ser-1371. Thr-1404 is modified (phosphothreonine). 4 disordered regions span residues 1407 to 1439, 1455 to 1486, 1526 to 1556, and 1630 to 1649; these read LQES…WDME, FPSH…AQPS, TPAS…EKTK, and MRRH…GAEG. The span at 1531-1540 shows a compositional bias: polar residues; the sequence is PASQATAASN. The span at 1541-1556 shows a compositional bias: basic and acidic residues; sequence SEEKTPAPRLAAEKTK. Residues 1549–1579 adopt a coiled-coil conformation; sequence RLAAEKTKKEEYMKKLHMQERAVEEVKLAIK.

Interacts with POLR2A (via the C-terminal domain).

The sequence is that of PHD and RING finger domain-containing protein 1 (PHRF1) from Homo sapiens (Human).